We begin with the raw amino-acid sequence, 289 residues long: S-methyl-5'-thioadenosine phosphorylase (289 aa).

Residues Ser24, 66 to 67 (RH), and 99 to 100 (TA) contribute to the phosphate site. Position 202 (Met202) interacts with substrate. Thr203 is a phosphate binding site. Substrate is bound at residue 226–228 (DYD).

It belongs to the PNP/MTAP phosphorylase family. MTAP subfamily. As to quaternary structure, homotrimer.

The protein resides in the cytoplasm. The protein localises to the nucleus. The enzyme catalyses S-methyl-5'-thioadenosine + phosphate = 5-(methylsulfanyl)-alpha-D-ribose 1-phosphate + adenine. It participates in amino-acid biosynthesis; L-methionine biosynthesis via salvage pathway; S-methyl-5-thio-alpha-D-ribose 1-phosphate from S-methyl-5'-thioadenosine (phosphorylase route): step 1/1. In terms of biological role, catalyzes the reversible phosphorylation of S-methyl-5'-thioadenosine (MTA) to adenine and 5-methylthioribose-1-phosphate. Involved in the breakdown of MTA, a major by-product of polyamine biosynthesis. Responsible for the first step in the methionine salvage pathway after MTA has been generated from S-adenosylmethionine. Has broad substrate specificity with 6-aminopurine nucleosides as preferred substrates. The chain is S-methyl-5'-thioadenosine phosphorylase from Drosophila pseudoobscura pseudoobscura (Fruit fly).